Here is a 222-residue protein sequence, read N- to C-terminus: Pyridoxine/pyridoxamine 5'-phosphate oxidase (222 aa).

Residues 14-17 and Lys71 contribute to the substrate site; that span reads RRNY. FMN is bound by residues 66–71, 81–82, Arg87, Lys88, and Gln110; these read RTVLLK and FT. 3 residues coordinate substrate: Tyr128, Arg132, and Ser136. FMN is bound by residues 145 to 146 and Trp190; that span reads QS. A substrate-binding site is contributed by 196 to 198; sequence RLN. An FMN-binding site is contributed by Arg200.

The protein belongs to the pyridoxamine 5'-phosphate oxidase family. As to quaternary structure, homodimer. The cofactor is FMN.

The enzyme catalyses pyridoxamine 5'-phosphate + O2 + H2O = pyridoxal 5'-phosphate + H2O2 + NH4(+). It catalyses the reaction pyridoxine 5'-phosphate + O2 = pyridoxal 5'-phosphate + H2O2. Its pathway is cofactor metabolism; pyridoxal 5'-phosphate salvage; pyridoxal 5'-phosphate from pyridoxamine 5'-phosphate: step 1/1. It participates in cofactor metabolism; pyridoxal 5'-phosphate salvage; pyridoxal 5'-phosphate from pyridoxine 5'-phosphate: step 1/1. In terms of biological role, catalyzes the oxidation of either pyridoxine 5'-phosphate (PNP) or pyridoxamine 5'-phosphate (PMP) into pyridoxal 5'-phosphate (PLP). The polypeptide is Pyridoxine/pyridoxamine 5'-phosphate oxidase (Prochlorococcus marinus (strain MIT 9303)).